A 112-amino-acid chain; its full sequence is UPF0145 protein MmarC6_1828 (112 aa).

This sequence belongs to the UPF0145 family.

This Methanococcus maripaludis (strain C6 / ATCC BAA-1332) protein is UPF0145 protein MmarC6_1828.